The sequence spans 1434 residues: DNA-directed RNA polymerase subunit beta' (1434 aa).

Zn(2+)-binding residues include Cys70, Cys72, Cys85, and Cys88. Mg(2+) is bound by residues Asp460, Asp462, and Asp464. Zn(2+) contacts are provided by Cys840, Cys914, Cys921, and Cys924.

It belongs to the RNA polymerase beta' chain family. As to quaternary structure, the RNAP catalytic core consists of 2 alpha, 1 beta, 1 beta' and 1 omega subunit. When a sigma factor is associated with the core the holoenzyme is formed, which can initiate transcription. Mg(2+) serves as cofactor. The cofactor is Zn(2+).

The enzyme catalyses RNA(n) + a ribonucleoside 5'-triphosphate = RNA(n+1) + diphosphate. Functionally, DNA-dependent RNA polymerase catalyzes the transcription of DNA into RNA using the four ribonucleoside triphosphates as substrates. This chain is DNA-directed RNA polymerase subunit beta', found in Tolumonas auensis (strain DSM 9187 / NBRC 110442 / TA 4).